Reading from the N-terminus, the 428-residue chain is Citrate synthase (428 aa).

Catalysis depends on residues H265, H306, and D363.

Belongs to the citrate synthase family. As to quaternary structure, homohexamer.

It carries out the reaction oxaloacetate + acetyl-CoA + H2O = citrate + CoA + H(+). It functions in the pathway carbohydrate metabolism; tricarboxylic acid cycle; isocitrate from oxaloacetate: step 1/2. Allosterically inhibited by NADH. The sequence is that of Citrate synthase (gltA) from Pseudomonas aeruginosa (strain ATCC 15692 / DSM 22644 / CIP 104116 / JCM 14847 / LMG 12228 / 1C / PRS 101 / PAO1).